We begin with the raw amino-acid sequence, 351 residues long: Very-long-chain 3-oxoacyl-CoA reductase (351 aa).

Residues 26–46 (LLWCAFTVGAVKLTTFMLSLI) traverse the membrane as a helical segment. Residues Leu72, Asp126, Asn153, Tyr225, Lys229, Val258, and Ser260 each coordinate NADP(+). Tyr225 serves as the catalytic Proton donor. Catalysis depends on Lys229, which acts as the Lowers pKa of active site Tyr.

Belongs to the short-chain dehydrogenases/reductases (SDR) family.

The protein localises to the endoplasmic reticulum membrane. It catalyses the reaction a very-long-chain (3R)-3-hydroxyacyl-CoA + NADP(+) = a very-long-chain 3-oxoacyl-CoA + NADPH + H(+). The protein operates within lipid metabolism; fatty acid biosynthesis. Component of the microsomal membrane bound fatty acid elongation system, which produces the 26-carbon very long-chain fatty acids (VLCFA) from palmitate. Catalyzes the reduction of the 3-ketoacyl-CoA intermediate that is formed in each cycle of fatty acid elongation. VLCFAs serve as precursors for ceramide and sphingolipids. The sequence is that of Very-long-chain 3-oxoacyl-CoA reductase from Eremothecium gossypii (strain ATCC 10895 / CBS 109.51 / FGSC 9923 / NRRL Y-1056) (Yeast).